The following is a 748-amino-acid chain: MRVGCCLLLKPLRQRLCTASISSRHIMRWCATSSSNINSTETAAKMPDDDVSGSLSAPSLLKYKIEPSTATMGAPRPPHDDDRAFCTLASFPPSHIRNVAVVAHVDHGKTTLSDAILRRTGVLSGSQVGTYTDRLLVERERGITIKAQTCSIFVVWDGEEFLLNLIDTPGHVDFQYEVSRSLSASDAALLLVDAAQGIEAQTMAHFHMALDRGLTILPVLTKMDAVLSDAPVDRALQDLEDSTGLLRREVLFTSAKEQLGIEALLHAIIERVPPPTGLLGLSDLQQLPPLLPGSAERVAMEEKMVPLRALLFDSWTSECGGGLRRPAPRGGEKVNSGNDNDRNLICLVRIIDGTLTAKTVVTFYQSQRRCEALEVGIIHPELRPTAALTAGMVGYVVFSQVRGEEFLVGETLYTLPTRKFARENIVPVPGFRRVQPVVFAGFYPDEGEYITQLREAVEKLRVNEPAVTMEPLDCPALGSGLQLGFLGMLHMQVFQERLLAEFGQRVLVTPPLVQYKYREAGSDEEEPLKPLTVHTWKWIHEGAACYLEPYVTATIITRREHFQAIDGEALRRFRGEQLDMRVLDDARVLVRYKMPLADLARGFFAVVKSLSHGYASLDYGDPVYEEADLVKVDVLVQKSRISALSVICLRSEAPSIGKRIVSSLKSNLTRTAVDIPLQAMVGSKIVARETVKAYRKDVTAKIHAGDISRKQKKWNDQKKGKERMARRTVGAVTLDQSILAAAMGAISL.

A mitochondrion-targeting transit peptide spans 1-29 (MRVGCCLLLKPLRQRLCTASISSRHIMRW). The 183-residue stretch at 94-276 (SHIRNVAVVA…AIIERVPPPT (183 aa)) folds into the tr-type G domain. Residues 103–110 (AHVDHGKT), 167–171 (DTPGH), and 221–224 (TKMD) contribute to the GTP site.

It belongs to the TRAFAC class translation factor GTPase superfamily. Classic translation factor GTPase family. LepA subfamily.

It localises to the mitochondrion inner membrane. It catalyses the reaction GTP + H2O = GDP + phosphate + H(+). In terms of biological role, promotes mitochondrial protein synthesis. May act as a fidelity factor of the translation reaction, by catalyzing a one-codon backward translocation of tRNAs on improperly translocated ribosomes. Binds to mitochondrial ribosomes in a GTP-dependent manner. The protein is Translation factor GUF1 homolog 2, mitochondrial of Trypanosoma cruzi (strain CL Brener).